Here is a 319-residue protein sequence, read N- to C-terminus: Glycine--tRNA ligase alpha subunit (319 aa).

Positions 290 to 319 (RQQQPEAPAPGPAAVVGGRDRKDACDVKEG) are disordered. Basic and acidic residues predominate over residues 307–319 (GRDRKDACDVKEG).

It belongs to the class-II aminoacyl-tRNA synthetase family. In terms of assembly, tetramer of two alpha and two beta subunits.

It localises to the cytoplasm. The enzyme catalyses tRNA(Gly) + glycine + ATP = glycyl-tRNA(Gly) + AMP + diphosphate. This chain is Glycine--tRNA ligase alpha subunit, found in Moorella thermoacetica (strain ATCC 39073 / JCM 9320).